Reading from the N-terminus, the 373-residue chain is ATP synthase gamma chain 1, chloroplastic (373 aa).

Residues 1–50 (MACSNLTTMWVSSKPSLSADSSSLSFRSVLKCPTNTSSPPSRASSVSPLQ) constitute a chloroplast transit peptide. Cysteine 139 is a catalytic residue. A disulfide bridge connects residues cysteine 249 and cysteine 255. Serine 347 carries the post-translational modification Phosphoserine.

The protein belongs to the ATPase gamma chain family. F-type ATPases have 2 components, CF(1) - the catalytic core - and CF(0) - the membrane proton channel. CF(1) has five subunits: alpha(3), beta(3), gamma(1), delta(1), epsilon(1). CF(0) has four main subunits: a, b, b' and c. Interacts with PAB.

It localises to the plastid. Its subcellular location is the chloroplast thylakoid membrane. Its function is as follows. Produces ATP from ADP in the presence of a proton gradient across the membrane. The gamma chain is believed to be important in regulating ATPase activity and the flow of protons through the CF(0) complex. This chain is ATP synthase gamma chain 1, chloroplastic (ATPC1), found in Arabidopsis thaliana (Mouse-ear cress).